The primary structure comprises 1288 residues: Vacuolating cytotoxin autotransporter (1288 aa).

The first 33 residues, 1–33, serve as a signal peptide directing secretion; sequence MEIQQTHRKINRPLVSLVLAGALISAIPQESHA. The tract at residues 326–377 is disordered; the sequence is PPEGGYKDKPNSTTSQSGTKNDKKEISQNNNSNTEVINPPNNTQKTETEPTQ. The segment covering 352-376 has biased composition (polar residues); that stretch reads SQNNNSNTEVINPPNNTQKTETEPT. Residues 1015–1288 form the Autotransporter domain; it reads KYEKPTNVWA…ASNLGMRYSF (274 aa).

Its subcellular location is the periplasm. The protein resides in the secreted. The protein localises to the cell surface. It localises to the cell outer membrane. Its function is as follows. Induces vacuolation of eukaryotic cells. Causes ulceration and gastric lesions. The polypeptide is Vacuolating cytotoxin autotransporter (vacA) (Helicobacter pylori (strain J99 / ATCC 700824) (Campylobacter pylori J99)).